The primary structure comprises 160 residues: Small ribosomal subunit protein uS7 (160 aa).

The protein belongs to the universal ribosomal protein uS7 family. In terms of assembly, part of the 30S ribosomal subunit. Contacts proteins S9 and S11.

One of the primary rRNA binding proteins, it binds directly to 16S rRNA where it nucleates assembly of the head domain of the 30S subunit. Is located at the subunit interface close to the decoding center, probably blocks exit of the E-site tRNA. This Ehrlichia chaffeensis (strain ATCC CRL-10679 / Arkansas) protein is Small ribosomal subunit protein uS7.